The primary structure comprises 173 residues: Adenine phosphoribosyltransferase (173 aa).

Belongs to the purine/pyrimidine phosphoribosyltransferase family. Homodimer.

It is found in the cytoplasm. The catalysed reaction is AMP + diphosphate = 5-phospho-alpha-D-ribose 1-diphosphate + adenine. Its pathway is purine metabolism; AMP biosynthesis via salvage pathway; AMP from adenine: step 1/1. In terms of biological role, catalyzes a salvage reaction resulting in the formation of AMP, that is energically less costly than de novo synthesis. In Caldanaerobacter subterraneus subsp. tengcongensis (strain DSM 15242 / JCM 11007 / NBRC 100824 / MB4) (Thermoanaerobacter tengcongensis), this protein is Adenine phosphoribosyltransferase.